The primary structure comprises 420 residues: MGEKKPEPLDFVKDFQEYLTQQTHHVNMISGSVSGDKEAEALQGAGTDGDQNGLDHPSVEVSLDENSGMLVDGFERTFDGKLKCRYCNYASKGTARLIEHIRIHTGEKPHRCHLCPFASAYERHLEAHMRSHTGEKPYKCELCSFRCSDRSNLSHHRRRKHKMVPIKGTRSSLSSKKMWGVLQKKTSNLGYSRRALINLSPPSMVVQKPDYLNDFTHEIPNIQTDSYESMAKTTPTGGLPRDPQELMVDNPLNQLSTLAGQLSSLPPENQNPASPDVVPCPDEKPFMIQQPSTQAVVSAVSASIPQSSSPTSPEPRPSHSQRNYSPVAGPSSEPSAHTSTPSIGNSQPSTPAPALPVQDPQLLHHCQHCDMYFFADNILYTIHMGCHGYENPFQCNICGCKCKNKYDFACHFARGQHNQH.

Lys5 participates in a covalent cross-link: Glycyl lysine isopeptide (Lys-Gly) (interchain with G-Cter in SUMO2). 3 C2H2-type zinc fingers span residues 82–104 (LKCR…IRIH), 110–132 (HRCH…MRSH), and 138–161 (YKCE…RRKH). A Glycyl lysine isopeptide (Lys-Gly) (interchain with G-Cter in SUMO2) cross-link involves residue Lys185. 2 stretches are compositionally biased toward polar residues: residues 223–236 (QTDS…TTPT) and 262–273 (LSSLPPENQNPA). Disordered stretches follow at residues 223–247 (QTDS…QELM) and 262–356 (LSSL…PALP). Over residues 290–311 (QPSTQAVVSAVSASIPQSSSPT) the composition is skewed to low complexity. Positions 332–349 (SEPSAHTSTPSIGNSQPS) are enriched in polar residues. A C2H2-type 4; degenerate zinc finger spans residues 364-387 (HHCQHCDMYFFADNILYTIHMGCH). A C2H2-type 5 zinc finger spans residues 393–417 (FQCNICGCKCKNKYDFACHFARGQH).

This sequence belongs to the Ikaros C2H2-type zinc-finger protein family. In terms of assembly, self-associates. Interacts with other family members; IKZF1, IKZF2, IKZF3 and IKZF4.

Its subcellular location is the nucleus. Functionally, transcriptional repressor that binds the core 5'GNNTGTNG-3' DNA consensus sequence. Involved in megakaryocyte differentiation. This Pongo abelii (Sumatran orangutan) protein is Zinc finger protein Pegasus (IKZF5).